Consider the following 444-residue polypeptide: 23S rRNA (uracil(1939)-C(5))-methyltransferase RlmD (444 aa).

Positions 5-67 constitute a TRAM domain; it reads RNRLDRTPFQ…RHFDEAKTVE (63 aa). The [4Fe-4S] cluster site is built by C80, C86, C89, and C168. Positions 276, 305, 310, 326, 353, and 374 each coordinate S-adenosyl-L-methionine. Catalysis depends on C400, which acts as the Nucleophile.

The protein belongs to the class I-like SAM-binding methyltransferase superfamily. RNA M5U methyltransferase family. RlmD subfamily.

The catalysed reaction is uridine(1939) in 23S rRNA + S-adenosyl-L-methionine = 5-methyluridine(1939) in 23S rRNA + S-adenosyl-L-homocysteine + H(+). In terms of biological role, catalyzes the formation of 5-methyl-uridine at position 1939 (m5U1939) in 23S rRNA. The polypeptide is 23S rRNA (uracil(1939)-C(5))-methyltransferase RlmD (Xanthomonas euvesicatoria pv. vesicatoria (strain 85-10) (Xanthomonas campestris pv. vesicatoria)).